A 195-amino-acid chain; its full sequence is Cytochrome c oxidase subunit 1 (195 aa).

Residues 12–32 (MYWVLGFIFLFTLGGLTGIVL) form a helical membrane-spanning segment. The Mg(2+) site is built by H42 and D43. H50 lines the heme a3 pocket. Residue H52 participates in Fe(II)-heme a binding. The next 3 helical transmembrane spans lie at 59 to 79 (AVFA…GLVL), 88 to 108 (FIVM…LGLA), and 131 to 151 (GSLM…EAFL).

This sequence belongs to the heme-copper respiratory oxidase family. As to quaternary structure, component of the cytochrome c oxidase (complex IV, CIV), a multisubunit enzyme composed of a catalytic core of 3 subunits and several supernumerary subunits. The complex exists as a monomer or a dimer and forms supercomplexes (SCs) in the inner mitochondrial membrane with ubiquinol-cytochrome c oxidoreductase (cytochrome b-c1 complex, complex III, CIII). The cofactor is heme. It depends on Cu cation as a cofactor.

It localises to the mitochondrion inner membrane. The catalysed reaction is 4 Fe(II)-[cytochrome c] + O2 + 8 H(+)(in) = 4 Fe(III)-[cytochrome c] + 2 H2O + 4 H(+)(out). Its pathway is energy metabolism; oxidative phosphorylation. Component of the cytochrome c oxidase, the last enzyme in the mitochondrial electron transport chain which drives oxidative phosphorylation. The respiratory chain contains 3 multisubunit complexes succinate dehydrogenase (complex II, CII), ubiquinol-cytochrome c oxidoreductase (cytochrome b-c1 complex, complex III, CIII) and cytochrome c oxidase (complex IV, CIV), that cooperate to transfer electrons derived from NADH and succinate to molecular oxygen, creating an electrochemical gradient over the inner membrane that drives transmembrane transport and the ATP synthase. Cytochrome c oxidase is the component of the respiratory chain that catalyzes the reduction of oxygen to water. Electrons originating from reduced cytochrome c in the intermembrane space (IMS) are transferred via the dinuclear copper A center (CU(A)) of subunit 2 and heme A of subunit 1 to the active site in subunit 1, a binuclear center (BNC) formed by heme A3 and copper B (CU(B)). The BNC reduces molecular oxygen to 2 water molecules using 4 electrons from cytochrome c in the IMS and 4 protons from the mitochondrial matrix. This is Cytochrome c oxidase subunit 1 (COI) from Albinaria turrita (Door snail).